A 599-amino-acid chain; its full sequence is Sulfite reductase [NADPH] flavoprotein alpha-component (599 aa).

In terms of domain architecture, Flavodoxin-like spans 64 to 202; that stretch reads ITIISASQTG…AASEWRARVV (139 aa). FMN is bound by residues 70–75, 117–120, and 153–162; these read SQTGNA, STQG, and LGDSSYEFFC. The 215-residue stretch at 234-448 folds into the FAD-binding FR-type domain; it reads DAPLVASLSV…IEHNDNFRLP (215 aa). FAD is bound by residues T322, A356, 386-389, 404-406, Y410, and 419-422; these read RLYS, TVG, and GGAS. NADP(+) contacts are provided by residues 519–520, 525–529, and D561; these read SR and KVYVQ. Residue Y599 coordinates FAD.

It belongs to the NADPH-dependent sulphite reductase flavoprotein subunit CysJ family. This sequence in the N-terminal section; belongs to the flavodoxin family. In the C-terminal section; belongs to the flavoprotein pyridine nucleotide cytochrome reductase family. As to quaternary structure, alpha(8)-beta(8). The alpha component is a flavoprotein, the beta component is a hemoprotein. Requires FAD as cofactor. FMN is required as a cofactor.

It carries out the reaction hydrogen sulfide + 3 NADP(+) + 3 H2O = sulfite + 3 NADPH + 4 H(+). Its pathway is sulfur metabolism; hydrogen sulfide biosynthesis; hydrogen sulfide from sulfite (NADPH route): step 1/1. In terms of biological role, component of the sulfite reductase complex that catalyzes the 6-electron reduction of sulfite to sulfide. This is one of several activities required for the biosynthesis of L-cysteine from sulfate. The flavoprotein component catalyzes the electron flow from NADPH -&gt; FAD -&gt; FMN to the hemoprotein component. This is Sulfite reductase [NADPH] flavoprotein alpha-component from Escherichia coli (strain K12).